Here is a 393-residue protein sequence, read N- to C-terminus: High mobility group protein DSP1 (393 aa).

The disordered stretch occupies residues 153-179 (QMQQQQQQQNVINSASPMSRVKADAKP). 2 consecutive DNA-binding regions (HMG box) follow at residues 179–249 (PRGR…QNYV) and 271–339 (PKRS…TEYK). The span at 364-374 (LLAAAAQQQHQ) shows a compositional bias: low complexity. The disordered stretch occupies residues 364-393 (LLAAAAQQQHQQLEEQHDDDDGDGDDDENQ). A compositionally biased stretch (acidic residues) spans 379–393 (QHDDDDGDGDDDENQ).

The protein belongs to the HMGB family.

It is found in the nucleus. Its subcellular location is the chromosome. Binds preferentially single-stranded DNA and unwinds double-stranded DNA. The chain is High mobility group protein DSP1 (Dsp1) from Drosophila melanogaster (Fruit fly).